Reading from the N-terminus, the 391-residue chain is S-adenosylmethionine synthase (391 aa).

ATP is bound at residue His14. Asp16 lines the Mg(2+) pocket. Glu42 is a binding site for K(+). L-methionine contacts are provided by Glu55 and Gln98. Positions 98–108 (QSADIAMGVDE) are flexible loop. Residues 172 to 174 (DGK), 238 to 239 (RF), Asp247, 253 to 254 (RK), Ala270, and Lys274 each bind ATP. L-methionine is bound at residue Asp247. Lys278 is an L-methionine binding site.

The protein belongs to the AdoMet synthase family. As to quaternary structure, homotetramer; dimer of dimers. Mg(2+) serves as cofactor. It depends on K(+) as a cofactor.

It localises to the cytoplasm. It carries out the reaction L-methionine + ATP + H2O = S-adenosyl-L-methionine + phosphate + diphosphate. It participates in amino-acid biosynthesis; S-adenosyl-L-methionine biosynthesis; S-adenosyl-L-methionine from L-methionine: step 1/1. Catalyzes the formation of S-adenosylmethionine (AdoMet) from methionine and ATP. The overall synthetic reaction is composed of two sequential steps, AdoMet formation and the subsequent tripolyphosphate hydrolysis which occurs prior to release of AdoMet from the enzyme. This Clostridium botulinum (strain Alaska E43 / Type E3) protein is S-adenosylmethionine synthase.